We begin with the raw amino-acid sequence, 82 residues long: MAERSQNLQDLFLNTVRKSKNPLTIFLINGVKLTGVVTSFDNFCVLLRRDGHSQLVYKHAISTIMPSQPVQLFEAEEGSREG.

A Sm domain is found at 10–70 (DLFLNTVRKS…ISTIMPSQPV (61 aa)).

It belongs to the Hfq family. In terms of assembly, homohexamer.

Functionally, RNA chaperone that binds small regulatory RNA (sRNAs) and mRNAs to facilitate mRNA translational regulation in response to envelope stress, environmental stress and changes in metabolite concentrations. Also binds with high specificity to tRNAs. In Chelativorans sp. (strain BNC1), this protein is RNA-binding protein Hfq.